A 585-amino-acid chain; its full sequence is MNLFTDFEARINRILESIDVIREKRSELDFRRINVEPPRDASHGDVATNAAMVLAKPLGMNPRALADLIGDKLAQDPEVAEVSVAGPGFINVRLSVSYWQKLLAVITRAGVDYGRSALGAGRKINVEYVSANPTGPMHVGHCRGAVVGDALANLLAFSGFDVTKEYYINDAGSQIEVLARSAFLRYRQALGEDIGEIPAGLYPGDYLVPAGEALADEYGTSLRIMPEDKWMPLVKERVIDAMMAMIREDLAALNVNHDVFFSERALHDNGAARIRTAINDLTFKGHVYKGMLPPPKGQLPEDWEDREQTLFRSTEVGDDIDRPLIKSDGSYTYFAADVAYFKDKFDRGFDEMIYVLGADHGGYVKRLEALARAISGGSAKLTVLLCQLVKLYRNGEPVKMSKRSGDFVTLREVVDEVGRDPVRFMMLYRKSSEPLDFDFAKVTEQSKDNPVFYVQYAHARCRSVFRQAAEAFPDLDLSSIDLAGAAGAIADPTEMQLVAKLAEYPRVVEAAAFSHEPHRIAFYLYDLAAVFHGHWNKGKENPALRFVNDKNRELSIARLGLVHAVASVLKSGLSITGTSAPDEMR.

A 'HIGH' region motif is present at residues 131–141; sequence ANPTGPMHVGH.

This sequence belongs to the class-I aminoacyl-tRNA synthetase family. Monomer.

The protein localises to the cytoplasm. The catalysed reaction is tRNA(Arg) + L-arginine + ATP = L-arginyl-tRNA(Arg) + AMP + diphosphate. The sequence is that of Arginine--tRNA ligase from Sinorhizobium medicae (strain WSM419) (Ensifer medicae).